The primary structure comprises 34 residues: Photosystem II reaction center protein T (34 aa).

The chain crosses the membrane as a helical span at residues 3–23; sequence ALVYTFLLVSTLGIIFFAIFF.

This sequence belongs to the PsbT family. As to quaternary structure, PSII is composed of 1 copy each of membrane proteins PsbA, PsbB, PsbC, PsbD, PsbE, PsbF, PsbH, PsbI, PsbJ, PsbK, PsbL, PsbM, PsbT, PsbY, PsbZ, Psb30/Ycf12, at least 3 peripheral proteins of the oxygen-evolving complex and a large number of cofactors. It forms dimeric complexes.

Its subcellular location is the plastid. The protein localises to the chloroplast thylakoid membrane. Its function is as follows. Found at the monomer-monomer interface of the photosystem II (PS II) dimer, plays a role in assembly and dimerization of PSII. PSII is a light-driven water plastoquinone oxidoreductase, using light energy to abstract electrons from H(2)O, generating a proton gradient subsequently used for ATP formation. The protein is Photosystem II reaction center protein T of Solanum lycopersicum (Tomato).